We begin with the raw amino-acid sequence, 671 residues long: MIDIDDVAAINPELVQLLPLRPKDSLPLQENVTIPKQKRKSVNSKIPGPKEGLRSRSTRISTVSEVRIPAQENEMEVELPVSTNSRKPFPIHTGHPRPSCSTVTELPLLMISEEAEEQAHSTRSTSSANPGNSVRRKSCIVKEMEKMKNKREEKRAQNSEIRIKRAQEYDNSFPNWEFARMIKEFRVTMDCNPLTVTDPIEEHRICVCVRKRPLNKQELAKKEIDVISVPSKCLLLVHEPKLKVDLTKYLENQAFCFDFAFDETASNEVVYRFTARPLVQTIFEGGKATCFAYGQTGSGKTHTMGGDLSGKSQNASKGIYAMASRDVFLLKNQPRYRSLNLEVYVTFFEIYNGKVFELLNKKAKLRVLEDSKQQVQVVGLQEYLVTCADDVIKMINMGSACRTSGQTFANSNSSRSHACFQILLRAKGRLHGKFSLVDLAGNERGADTSSADRQTRMEGAEINKSLLALKESIRALGQNKAHTPFRESKLTQVLRDSFIGENSRTCMIAMISPGISSCEYTLNTLRYADRVKELSPHSGPSGEQAVQMETEEMDASSHGASLTGNEEEELSSQMSSFNEAMTQIRELEERAMEELREIIQQGPSWLELSEMTDQPDYDLETFVNKAESALTQQAKQAKHFSALQEVIKALRLAMQLEEQASKQINSKKRHQ.

A globular region spans residues 1 to 200; the sequence is MIDIDDVAAI…CNPLTVTDPI (200 aa). The interval 37-58 is disordered; sequence QKRKSVNSKIPGPKEGLRSRST. Ser41 carries the post-translational modification Phosphoserine; by AURKB. The Microtubule tip localization signal signature appears at 44–47; it reads SKIP. Phosphoserine occurs at positions 55, 57, 61, 112, 121, 133, and 138. The disordered stretch occupies residues 115-138; the sequence is AEEQAHSTRSTSSANPGNSVRRKS. Over residues 121–132 the composition is skewed to polar residues; sequence STRSTSSANPGN. The interval 153-184 is negative regulator of microtubule-binding; sequence EKRAQNSEIRIKRAQEYDNSFPNWEFARMIKE. The region spanning 204-534 is the Kinesin motor domain; that stretch reads RICVCVRKRP…LRYADRVKEL (331 aa). Residues Arg210 and 294-301 each bind ATP; that span reads GQTGSGKT. Residue Ser465 is modified to Phosphoserine. Residues 533 to 568 are disordered; the sequence is ELSPHSGPSGEQAVQMETEEMDASSHGASLTGNEEE. The stretch at 566 to 601 forms a coiled coil; sequence EEEELSSQMSSFNEAMTQIRELEERAMEELREIIQQ. Ser576 bears the Phosphoserine mark.

The protein belongs to the TRAFAC class myosin-kinesin ATPase superfamily. Kinesin family. MCAK/KIF2 subfamily. Interacts with CENPH. Interacts with MTUS2/TIP150; the interaction is direct. Interacts with MAPRE1; the interaction is direct, regulated by phosphorylation and is probably required for targeting to growing microtubule plus ends. Interacts with KIF18B at microtubule tips; this interaction increases the affinity of both partners for microtubule plus ends and is required for robust microtubule depolymerization. Phosphorylation by AURKA or AURKB strongly reduces KIF18B-binding. Post-translationally, phosphorylation by AURKB, regulates association with centromeres and kinetochores and the microtubule depolymerization activity. Ubiquitinated. As to expression, testis. Localized to the meiotically active cells of the seminiferous epithelia in the testis.

It localises to the cytoplasm. The protein resides in the cytoskeleton. It is found in the nucleus. Its subcellular location is the chromosome. The protein localises to the centromere. It localises to the kinetochore. In complex with KIF18B, constitutes the major microtubule plus-end depolymerizing activity in mitotic cells. Regulates the turnover of microtubules at the kinetochore and functions in chromosome segregation during mitosis. Plays a role in chromosome congression and is required for the lateral to end-on conversion of the chromosome-microtubule attachment. The polypeptide is Kinesin-like protein KIF2C (Kif2c) (Rattus norvegicus (Rat)).